The primary structure comprises 280 residues: NAD(P)H-quinone oxidoreductase subunit K, chloroplastic (280 aa).

[4Fe-4S] cluster is bound by residues C65, C66, C130, and C161. Residues 257-280 (LLKDWKQSNQKQEQNVKMMKEEEA) are disordered.

The protein belongs to the complex I 20 kDa subunit family. As to quaternary structure, NDH is composed of at least 16 different subunits, 5 of which are encoded in the nucleus. Requires [4Fe-4S] cluster as cofactor.

The protein resides in the plastid. It is found in the chloroplast thylakoid membrane. It catalyses the reaction a plastoquinone + NADH + (n+1) H(+)(in) = a plastoquinol + NAD(+) + n H(+)(out). It carries out the reaction a plastoquinone + NADPH + (n+1) H(+)(in) = a plastoquinol + NADP(+) + n H(+)(out). Functionally, NDH shuttles electrons from NAD(P)H:plastoquinone, via FMN and iron-sulfur (Fe-S) centers, to quinones in the photosynthetic chain and possibly in a chloroplast respiratory chain. The immediate electron acceptor for the enzyme in this species is believed to be plastoquinone. Couples the redox reaction to proton translocation, and thus conserves the redox energy in a proton gradient. The polypeptide is NAD(P)H-quinone oxidoreductase subunit K, chloroplastic (Staurastrum punctulatum (Green alga)).